Here is a 1308-residue protein sequence, read N- to C-terminus: Misshapen-like kinase 1 (1308 aa).

The region spanning 25–289 is the Protein kinase domain; sequence FELVEVVGNG…TEQLLKFPFI (265 aa). ATP-binding positions include 31-39 and Lys-54; that span reads VGNGTYGQV. Asp-153 functions as the Proton acceptor in the catalytic mechanism. 3 disordered regions span residues 299–347, 363–383, and 395–862; these read RIQL…NVPG, KSNS…QRDP, and QRRI…GGTM. Residues 317-333 show a composition bias toward acidic residues; that stretch reads EETEYEYSGSEEEDDSH. Phosphoserine is present on residues Ser-324 and Ser-326. Residues 371–380 show a composition bias toward low complexity; sequence QQQQLQQQQQ. Positions 396 to 466 are enriched in basic and acidic residues; it reads RRIEEQKEER…EEQRQSERLQ (71 aa). Positions 479-497 are enriched in low complexity; that stretch reads LQQQQQQQQLQKQQQQQQQ. Arg-503 and Arg-511 each carry omega-N-methylarginine. The span at 520–530 shows a compositional bias: basic and acidic residues; the sequence is AWAREVEERAR. Residues 600–610 are compositionally biased toward polar residues; it reads RSQSLQDQPTR. Residues 623 to 633 show a composition bias toward low complexity; it reads PAAVPTPTATP. A Phosphoserine modification is found at Ser-644. Residues 673 to 685 are compositionally biased toward polar residues; that stretch reads QRTSSIATALNTS. A phosphoserine mark is found at Asp-702, Ser-720, Ser-729, Ser-745, Ser-746, and Ser-750. Over residues 702 to 714 the composition is skewed to basic and acidic residues; sequence DLRRSDPGWERSD. Residues 773–797 are compositionally biased toward basic and acidic residues; that stretch reads AIGEDFVLLKERTLDEAPKPPKKAM. A compositionally biased stretch (acidic residues) spans 804–820; the sequence is EEVESSEEEEEEGDGEP. The mediates interaction with RAP2A stretch occupies residues 842–1308; sequence MVVHDVEEIS…TLNRNCIMNW (467 aa). Thr-867 is modified (phosphothreonine). A disordered region spans residues 881-918; sequence GYTNLPDVVQPSHSPTENSKGQSPPTKDGGSDYQSRGL. The segment covering 891–905 has biased composition (polar residues); that stretch reads PSHSPTENSKGQSPP. The 288-residue stretch at 995-1282 folds into the CNH domain; the sequence is NSEILCAALW…KFLCERNDKV (288 aa).

The protein belongs to the protein kinase superfamily. STE Ser/Thr protein kinase family. STE20 subfamily. In terms of assembly, interacts with RAP2A and TANC1. Interacts with NCK1. Requires Mg(2+) as cofactor. Post-translationally, autophosphorylated. Appears to be ubiquitous, expressed in all tissue types examined. Highly expressed in the brain, moderately expressed in kidney and spleen, low levels present in heart and skeletal muscle. Isoform 2 is more abundant in the brain than isoform 1.

Its subcellular location is the cytoplasm. The protein resides in the postsynaptic density. It localises to the cell projection. The protein localises to the axon. It is found in the dendrite. The catalysed reaction is L-seryl-[protein] + ATP = O-phospho-L-seryl-[protein] + ADP + H(+). It carries out the reaction L-threonyl-[protein] + ATP = O-phospho-L-threonyl-[protein] + ADP + H(+). Its function is as follows. Serine/threonine kinase which acts as a negative regulator of Ras-related Rap2-mediated signal transduction to control neuronal structure and AMPA receptor trafficking. Required for normal synaptic density, dendrite complexity, as well as surface AMPA receptor expression in hippocampal neurons. Can activate the JNK and MAPK14/p38 pathways and mediates stimulation of the stress-activated protein kinase MAPK14/p38 MAPK downstream of the Raf/ERK pathway. Phosphorylates TANC1 upon stimulation by RAP2A, MBP and SMAD1. Has an essential function in negative selection of thymocytes, perhaps by coupling NCK1 to activation of JNK1. Activator of the Hippo signaling pathway which plays a pivotal role in organ size control and tumor suppression by restricting proliferation and promoting apoptosis. MAP4Ks act in parallel to and are partially redundant with STK3/MST2 and STK4/MST2 in the phosphorylation and activation of LATS1/2, and establish MAP4Ks as components of the expanded Hippo pathway. This chain is Misshapen-like kinase 1, found in Mus musculus (Mouse).